A 199-amino-acid chain; its full sequence is Ribonuclease P protein subunit p25 (199 aa).

The span at 1–11 shows a compositional bias: basic and acidic residues; that stretch reads MENFRKVRSEE. Disordered regions lie at residues 1-28 and 144-199; these read MENF…SGPF and LDPR…DQTA. Over residues 151–166 the composition is skewed to pro residues; the sequence is YQPPNPHPGPSSPPAA. Phosphoserine is present on residues serine 172 and serine 182.

It belongs to the histone-like Alba family. Component of nuclear RNase P and RNase MRP ribonucleoproteins. RNase P consists of a catalytic RNA moiety and 10 different protein chains; POP1, POP4, POP5, POP7, RPP14, RPP21, RPP25, RPP30, RPP38 and RPP40. Within the RNase P complex, POP1, POP7 and RPP25 form the 'finger' subcomplex, POP5, RPP14, RPP40 and homodimeric RPP30 form the 'palm' subcomplex, and RPP21, POP4 and RPP38 form the 'wrist' subcomplex. All subunits of the RNase P complex interact with the catalytic RNA. Several subunits of RNase P are also part of the RNase MRP complex. RNase MRP consists of a catalytic RNA moiety and about 8 protein subunits; POP1, POP7, RPP25, RPP30, RPP38, RPP40 and possibly also POP4 and POP5. POP7 forms a heterodimer with RPP25 that binds to the P3 stem loop of the catalytic RNA.

Its subcellular location is the nucleus. It localises to the nucleolus. Functionally, component of ribonuclease P, a ribonucleoprotein complex that generates mature tRNA molecules by cleaving their 5'-ends. Also a component of the MRP ribonuclease complex, which cleaves pre-rRNA sequences. This chain is Ribonuclease P protein subunit p25 (RPP25), found in Homo sapiens (Human).